The primary structure comprises 354 residues: G-protein coupled estrogen receptor 1 (354 aa).

At 1-40 (MEEQTTSLVWIYVNSTEQLNTSYEYNTTYLIEDSDKYQSY) the chain is on the extracellular side. Residues 41–61 (VIGLFLSCLYTILLFPIGFIG) traverse the membrane as a helical segment. Residues 62–81 (NILILVVNLNHRGKMAIPDL) lie on the Cytoplasmic side of the membrane. Residues 82 to 102 (YFVNLAVADLILVADSLIEVF) form a helical membrane-spanning segment. Residues 103 to 112 (NLNEKYYDYA) lie on the Extracellular side of the membrane. The chain crosses the membrane as a helical span at residues 113-133 (VLCTFMSLFLQVNMYSSIFFL). C115 and C192 form a disulfide bridge. At 134–160 (TWMSFDRYIALANSMSSSPLRTMQHAK) the chain is on the cytoplasmic side. The chain crosses the membrane as a helical span at residues 161–181 (LSCGLIWMASILATLLPFTIV). Residues 182–202 (QTQHRGEVHFCFANVFEIQWL) are Extracellular-facing. A helical transmembrane segment spans residues 203-223 (EVTIGFLVPFSIIGLCYSLIG). Over 224 to 245 (RILMRSQKHRGLWPRRQKALRM) the chain is Cytoplasmic. A helical transmembrane segment spans residues 246–266 (IVVVVLVFFICWLPENVFISI). The Extracellular segment spans residues 267 to 292 (QLLQGTADPSQRTATTLRHDYPLTGH). Residues 293-313 (IVNLAAFSNSCLNPIIYSFLG) traverse the membrane as a helical segment. Residues 314 to 353 (ETFRDKLRLFIKQKASWSVVNRFCHHGLDLHLPVRSEVSE) lie on the Cytoplasmic side of the membrane.

This sequence belongs to the G-protein coupled receptor 1 family. In terms of assembly, homodimer. Heterodimer. In terms of tissue distribution, expressed in oocytes (at protein level). Highly expressed in brain, heart, testis and ovary. Weakly expressed in muscle and intestine.

The protein resides in the nucleus. The protein localises to the cytoplasm. It localises to the perinuclear region. Its subcellular location is the cytoskeleton. It is found in the cytoplasmic vesicle membrane. The protein resides in the cell membrane. The protein localises to the basolateral cell membrane. It localises to the endoplasmic reticulum membrane. Its subcellular location is the early endosome. It is found in the recycling endosome. The protein resides in the golgi apparatus. The protein localises to the trans-Golgi network. It localises to the golgi apparatus membrane. Its subcellular location is the cell projection. It is found in the dendrite. The protein resides in the dendritic spine membrane. The protein localises to the axon. It localises to the postsynaptic density. Its subcellular location is the mitochondrion membrane. In terms of biological role, membrane G-protein coupled estrogen receptor that binds to 17-beta-estradiol (E2) with high affinity, leading to rapid and transient activation of numerous intracellular signaling pathways. Plays a role in the embryonic development of sensory and motor neurons. May induce apoptosis and reduce proliferation of brain cells. Involved in maintenance of meiotic arrest in oocytes. In Micropogonias undulatus (Atlantic croaker), this protein is G-protein coupled estrogen receptor 1 (gper1).